The chain runs to 230 residues: RING finger protein 141 (230 aa).

The N-myristoyl glycine moiety is linked to residue Gly-2. The RING-type zinc-finger motif lies at 155–192; it reads CCICMDGRADLILPCAHSFCQKCIDKWSDRHRNCPICR.

It localises to the membrane. May be involved in spermatogenesis. The sequence is that of RING finger protein 141 (RNF141) from Bos taurus (Bovine).